The sequence spans 154 residues: 6,7-dimethyl-8-ribityllumazine synthase (154 aa).

5-amino-6-(D-ribitylamino)uracil contacts are provided by residues F21, 55–57, and 79–81; these read AFE and CVI. 84 to 85 serves as a coordination point for (2S)-2-hydroxy-3-oxobutyl phosphate; it reads AT. The Proton donor role is filled by H87. F112 contacts 5-amino-6-(D-ribitylamino)uracil. A (2S)-2-hydroxy-3-oxobutyl phosphate-binding site is contributed by R126.

It belongs to the DMRL synthase family. Forms an icosahedral capsid composed of 60 subunits, arranged as a dodecamer of pentamers.

The catalysed reaction is (2S)-2-hydroxy-3-oxobutyl phosphate + 5-amino-6-(D-ribitylamino)uracil = 6,7-dimethyl-8-(1-D-ribityl)lumazine + phosphate + 2 H2O + H(+). It participates in cofactor biosynthesis; riboflavin biosynthesis; riboflavin from 2-hydroxy-3-oxobutyl phosphate and 5-amino-6-(D-ribitylamino)uracil: step 1/2. Catalyzes the formation of 6,7-dimethyl-8-ribityllumazine by condensation of 5-amino-6-(D-ribitylamino)uracil with 3,4-dihydroxy-2-butanone 4-phosphate. This is the penultimate step in the biosynthesis of riboflavin. The protein is 6,7-dimethyl-8-ribityllumazine synthase of Staphylococcus aureus (strain Newman).